A 382-amino-acid polypeptide reads, in one-letter code: uncharacterized protein (382 aa).

Transmembrane regions (helical) follow at residues 14–34, 45–65, 75–95, 102–122, 131–151, 157–177, 204–224, 231–251, 270–290, 291–311, 325–345, and 349–369; these read GLLLLTLAIAVLNTLVLLWLA, MVSSSYFTGNLVGTLFTGYLI, YLASLIFAAGCVGLGVMVGFW, FIAGIGCAMIWVVVESALMCS, LLAAYMMVYYMGTFLGQLLVS, LLHVLPWVTGMILAGILPLLF, LGVNGCIISGIVLGSLYGLMP, GMANASIGFWMAVLVSAGILG, VQVFVVILGSIAMLTQAAMAP, ALFILGAAGFTLYPVAMAWAC, ALLLSYTVGSLLGPSFAAMLM, and SDNLLFIMIASVSFIYLLMLL.

It belongs to the major facilitator superfamily. YcaD (TC 2.A.1.26) family.

The protein localises to the cell inner membrane. This is an uncharacterized protein from Salmonella paratyphi A (strain ATCC 9150 / SARB42).